The following is a 256-amino-acid chain: tRNA (guanine-N(7)-)-methyltransferase (256 aa).

Residues M1–Q15 show a composition bias toward polar residues. The tract at residues M1–P22 is disordered. S-adenosyl-L-methionine-binding positions include G79, E102–I103, N137–A138, and L157. D160 is a catalytic residue. S-adenosyl-L-methionine is bound at residue S235–E237.

The protein belongs to the class I-like SAM-binding methyltransferase superfamily. TrmB family.

The protein localises to the nucleus. The enzyme catalyses guanosine(46) in tRNA + S-adenosyl-L-methionine = N(7)-methylguanosine(46) in tRNA + S-adenosyl-L-homocysteine. The protein operates within tRNA modification; N(7)-methylguanine-tRNA biosynthesis. In terms of biological role, catalyzes the formation of N(7)-methylguanine at position 46 (m7G46) in tRNA. This chain is tRNA (guanine-N(7)-)-methyltransferase, found in Drosophila yakuba (Fruit fly).